A 370-amino-acid polypeptide reads, in one-letter code: Putative agmatine deiminase (370 aa).

Cys361 serves as the catalytic Amidino-cysteine intermediate.

This sequence belongs to the agmatine deiminase family.

It carries out the reaction agmatine + H2O = N-carbamoylputrescine + NH4(+). The protein is Putative agmatine deiminase of Shewanella baltica (strain OS195).